The chain runs to 285 residues: Shikimate dehydrogenase (NADP(+)) (285 aa).

Shikimate is bound by residues 20–22 (SLS) and T67. K71 functions as the Proton acceptor in the catalytic mechanism. Residue E83 participates in NADP(+) binding. Residues N92 and D107 each coordinate shikimate. Residues 132–136 (GAGGA) and L230 contribute to the NADP(+) site. Y232 is a shikimate binding site. G253 contributes to the NADP(+) binding site.

It belongs to the shikimate dehydrogenase family. In terms of assembly, homodimer.

The catalysed reaction is shikimate + NADP(+) = 3-dehydroshikimate + NADPH + H(+). It functions in the pathway metabolic intermediate biosynthesis; chorismate biosynthesis; chorismate from D-erythrose 4-phosphate and phosphoenolpyruvate: step 4/7. Involved in the biosynthesis of the chorismate, which leads to the biosynthesis of aromatic amino acids. Catalyzes the reversible NADPH linked reduction of 3-dehydroshikimate (DHSA) to yield shikimate (SA). In Salinibacter ruber (strain DSM 13855 / M31), this protein is Shikimate dehydrogenase (NADP(+)).